We begin with the raw amino-acid sequence, 46 residues long: Viscotoxin-C1 (46 aa).

3 disulfide bridges follow: Cys3–Cys40, Cys4–Cys32, and Cys16–Cys26.

Monomer.

It is found in the secreted. Functionally, thionins are small plant proteins which are toxic to animal cells. They seem to exert their toxic effect at the level of the cell membrane. Their precise function is not known. This chain is Viscotoxin-C1, found in Viscum album (European mistletoe).